We begin with the raw amino-acid sequence, 782 residues long: Zinc finger and SCAN domain-containing protein 10 (782 aa).

The interval 1-37 (MLAEPVPDALEQEHPGAVKLEEDEVGEEDPRLAESRP) is disordered. The SCAN box domain maps to 1–71 (MLAEPVPDAL…GRLRELCNHW (71 aa)). 2 stretches are compositionally biased toward basic and acidic residues: residues 11–20 (EQEHPGAVKL) and 28–37 (EDPRLAESRP). Phosphoserine occurs at positions 160 and 206. 2 disordered regions span residues 197 to 233 (LAPS…ENSR) and 290 to 321 (SQTE…TPAD). 14 C2H2-type zinc fingers span residues 292 to 315 (TEKP…STGW), 321 to 343 (DGSE…EMQF), 349 to 371 (GVNF…NLQP), 377 to 399 (SFRC…HMRT), 421 to 443 (LTKH…NQGF), 467 to 489 (EGKT…TFKR), 495 to 517 (RHLR…SLSS), 523 to 545 (PYVC…HTRR), 551 to 573 (RPFS…SHQQ), 579 to 601 (KPHA…RHLL), 607 to 629 (RPYH…RHVR), 635 to 657 (KPCR…RHQR), 669 to 691 (ICGH…TGER), and 697 to 719 (TCGR…TGSK). The span at 302 to 313 (LTQTVGQETSST) shows a compositional bias: polar residues. Glutamine 485 is modified (N5-methylglutamine). Residues 491 to 522 (SSLKRHLRNHAKDKDHLSSEDPGSLSSSQESN) form a disordered region. Over residues 500-509 (HAKDKDHLSS) the composition is skewed to basic and acidic residues. Over residues 510–521 (EDPGSLSSSQES) the composition is skewed to low complexity.

In terms of assembly, interacts with POU5F1/OCT4 and SOX2. Post-translationally, methylated at Gln-485 by N6AMT1. As to expression, embryonic stem (ES) cell-specific. Not expressed in adult, except in testis.

Its subcellular location is the nucleus. In terms of biological role, embryonic stem (ES) cell-specific transcription factor required to maintain ES cell pluripotency. Can both activate and /or repress expression of target genes, depending on the context. Specifically binds the 5'-[GA]CGCNNGCG[CT]-3' DNA consensus sequence. Regulates expression of POU5F1/OCT4, ZSCAN4 and ALYREF/THOC4. The protein is Zinc finger and SCAN domain-containing protein 10 (Zscan10) of Mus musculus (Mouse).